We begin with the raw amino-acid sequence, 386 residues long: Cytochrome b (386 aa).

The next 4 membrane-spanning stretches (helical) occupy residues 32 to 52 (FGSL…TLAM), 76 to 98 (WLIR…LHVG), 113 to 133 (TWII…LGYV), and 179 to 199 (FFAL…MHLI). Residues histidine 82 and histidine 96 each coordinate heme b. The heme b site is built by histidine 183 and histidine 197. Histidine 202 is a binding site for a ubiquinone. The next 4 helical transmembrane spans lie at 226–246 (YIFK…LFVF), 290–310 (LLGV…PITD), 322–342 (LSKV…QLGA), and 349–369 (FIEF…VIMP).

It belongs to the cytochrome b family. In terms of assembly, fungal cytochrome b-c1 complex contains 10 subunits; 3 respiratory subunits, 2 core proteins and 5 low-molecular weight proteins. Cytochrome b-c1 complex is a homodimer. The cofactor is heme b.

Its subcellular location is the mitochondrion inner membrane. Its function is as follows. Component of the ubiquinol-cytochrome c reductase complex (complex III or cytochrome b-c1 complex) that is part of the mitochondrial respiratory chain. The b-c1 complex mediates electron transfer from ubiquinol to cytochrome c. Contributes to the generation of a proton gradient across the mitochondrial membrane that is then used for ATP synthesis. This Talaromyces marneffei (Penicillium marneffei) protein is Cytochrome b (cob).